The following is a 106-amino-acid chain: UPF0091 protein RC0354 (106 aa).

The protein belongs to the UPF0091 family.

The polypeptide is UPF0091 protein RC0354 (Rickettsia conorii (strain ATCC VR-613 / Malish 7)).